The primary structure comprises 375 residues: Platelet-derived growth factor receptor-like protein (375 aa).

A signal peptide spans 1–21; the sequence is MKIWLLLGLLLMHEALEDVTG. The interval 20–64 is disordered; the sequence is TGQHPPKNKRPKEPGENRIKPTNKKVKPKIPKIKDRDSADPTPKT. The span at 40–50 shows a compositional bias: basic residues; the sequence is PTNKKVKPKIP. One can recognise an Ig-like C2-type 1 domain in the interval 62 to 159; the sequence is PKTQSIMTQM…GYVCRRDEAK (98 aa). Cysteine 96 and cysteine 143 form a disulfide bridge. N-linked (GlcNAc...) asparagine glycosylation is found at asparagine 132 and asparagine 219. The region spanning 272–373 is the Ig-like C2-type 2 domain; that stretch reads PSTTILASSN…GQTTVATTVE (102 aa). Cysteines 293 and 357 form a disulfide.

As to quaternary structure, forms a complex composed of PDGFRL, TNK2 and GRB2.

It is found in the secreted. The chain is Platelet-derived growth factor receptor-like protein (PDGFRL) from Bos taurus (Bovine).